The chain runs to 703 residues: Elongation factor G 1 (703 aa).

Positions 8–290 (ERYRNIGISA…AVIDFLPSPV (283 aa)) constitute a tr-type G domain. Residues 17–24 (AHIDAGKT), 88–92 (DTPGH), and 142–145 (NKMD) contribute to the GTP site.

It belongs to the TRAFAC class translation factor GTPase superfamily. Classic translation factor GTPase family. EF-G/EF-2 subfamily.

The protein resides in the cytoplasm. Catalyzes the GTP-dependent ribosomal translocation step during translation elongation. During this step, the ribosome changes from the pre-translocational (PRE) to the post-translocational (POST) state as the newly formed A-site-bound peptidyl-tRNA and P-site-bound deacylated tRNA move to the P and E sites, respectively. Catalyzes the coordinated movement of the two tRNA molecules, the mRNA and conformational changes in the ribosome. The chain is Elongation factor G 1 from Ralstonia nicotianae (strain ATCC BAA-1114 / GMI1000) (Ralstonia solanacearum).